The sequence spans 117 residues: MYTKRINRLQRISQEIQRKVAIIIHHKVHDPRVGLPTISGVQVSRDLKNAKIFITFLDKNNIEEINFSILILQKASGFIRFLLANSMNLRTVPVLLFKYDYSLKEGIKICKLISQLK.

Belongs to the RbfA family. In terms of assembly, monomer. Binds 30S ribosomal subunits, but not 50S ribosomal subunits or 70S ribosomes.

The protein resides in the cytoplasm. Its function is as follows. One of several proteins that assist in the late maturation steps of the functional core of the 30S ribosomal subunit. Associates with free 30S ribosomal subunits (but not with 30S subunits that are part of 70S ribosomes or polysomes). Required for efficient processing of 16S rRNA. May interact with the 5'-terminal helix region of 16S rRNA. This Blochmanniella floridana protein is Ribosome-binding factor A.